The following is a 1221-amino-acid chain: WEB family protein At4g27595, chloroplastic (1221 aa).

The disordered stretch occupies residues 1–68 (MASRTKTGLM…VSDRRTARVP (68 aa)). Residues 1-82 (MASRTKTGLM…ANYFLIIICM (82 aa)) constitute a chloroplast transit peptide. Positions 32–58 (SDGNSPSPVQSTRLSIDRSPQTVNSKP) are enriched in polar residues. Coiled-coil stretches lie at residues 95–149 (TGLL…AAQH), 202–543 (TEEL…FNSK), and 587–1084 (AAKE…GEEI). Positions 1073–1083 (EASSTHEKGEE) are enriched in basic and acidic residues. The disordered stretch occupies residues 1073-1221 (EASSTHEKGE…LLKKKSSSQK (149 aa)). A compositionally biased stretch (polar residues) spans 1084 to 1097 (ITNTNPFDNSTGEQ). 2 stretches are compositionally biased toward basic and acidic residues: residues 1106–1116 (AIDRHLKDDTT) and 1129–1160 (KGEK…TEHD). The segment covering 1175–1187 (NFDQLSNGLSLAE) has biased composition (polar residues).

The protein belongs to the WEB family.

The protein localises to the plastid. It localises to the chloroplast. In Arabidopsis thaliana (Mouse-ear cress), this protein is WEB family protein At4g27595, chloroplastic.